A 289-amino-acid polypeptide reads, in one-letter code: ATP synthase gamma chain (289 aa).

Belongs to the ATPase gamma chain family. In terms of assembly, F-type ATPases have 2 components, CF(1) - the catalytic core - and CF(0) - the membrane proton channel. CF(1) has five subunits: alpha(3), beta(3), gamma(1), delta(1), epsilon(1). CF(0) has three main subunits: a, b and c.

It is found in the cell inner membrane. In terms of biological role, produces ATP from ADP in the presence of a proton gradient across the membrane. The gamma chain is believed to be important in regulating ATPase activity and the flow of protons through the CF(0) complex. This is ATP synthase gamma chain from Pasteurella multocida (strain Pm70).